The following is a 224-amino-acid chain: UPF0758 protein VF_0126 (224 aa).

Positions 102 to 224 (ALTSPEHTKR…IVSFAERGWI (123 aa)) constitute an MPN domain. Residues H173, H175, and D186 each contribute to the Zn(2+) site. A JAMM motif motif is present at residues 173–186 (HNHPSGVAEPSQAD).

Belongs to the UPF0758 family.

In Aliivibrio fischeri (strain ATCC 700601 / ES114) (Vibrio fischeri), this protein is UPF0758 protein VF_0126.